Consider the following 203-residue polypeptide: N-(5'-phosphoribosyl)anthranilate isomerase (203 aa).

Belongs to the TrpF family.

The catalysed reaction is N-(5-phospho-beta-D-ribosyl)anthranilate = 1-(2-carboxyphenylamino)-1-deoxy-D-ribulose 5-phosphate. The protein operates within amino-acid biosynthesis; L-tryptophan biosynthesis; L-tryptophan from chorismate: step 3/5. This chain is N-(5'-phosphoribosyl)anthranilate isomerase, found in Caldanaerobacter subterraneus subsp. tengcongensis (strain DSM 15242 / JCM 11007 / NBRC 100824 / MB4) (Thermoanaerobacter tengcongensis).